The chain runs to 434 residues: Alpha-enolase (434 aa).

S2 is modified (N-acetylserine). Position 5 is an N6-acetyllysine (K5). Residue S40 coordinates Mg(2+). The residue at position 44 (Y44) is a Phosphotyrosine. The residue at position 60 (K60) is an N6-acetyllysine; alternate. Residue K60 is modified to N6-succinyllysine; alternate. Residues K64 and K71 each carry the N6-acetyllysine modification. Residue K89 is modified to N6-acetyllysine; alternate. An N6-succinyllysine; alternate modification is found at K89. N6-acetyllysine is present on residues K92 and K126. Positions 158 and 167 each coordinate substrate. N6-acetyllysine is present on residues K193 and K199. An N6-acetyllysine; alternate modification is found at K202. Residue K202 forms a Glycyl lysine isopeptide (Lys-Gly) (interchain with G-Cter in SUMO2); alternate linkage. The active-site Proton donor is the E210. 2 positions are modified to N6-acetyllysine; alternate: K228 and K233. K228 is modified (N6-succinyllysine; alternate). N6-(2-hydroxyisobutyryl)lysine; alternate is present on K228. K233 bears the N6-malonyllysine; alternate mark. D245 provides a ligand contact to Mg(2+). The residue at position 254 (S254) is a Phosphoserine. N6-acetyllysine is present on K256. At S263 the chain carries Phosphoserine. The residue at position 281 (K281) is an N6-acetyllysine; alternate. An N6-(2-hydroxyisobutyryl)lysine; alternate modification is found at K281. Position 287 is a phosphotyrosine (Y287). The residue at position 291 (S291) is a Phosphoserine. Mg(2+) is bound by residues E293 and D318. 2 residues coordinate substrate: E293 and D318. Residues K335 and K343 each carry the N6-acetyllysine modification. Catalysis depends on K343, which acts as the Proton acceptor. Substrate-binding positions include 370 to 373 and K394; that span reads SHRS. The segment at 405-434 is required for interaction with PLG; sequence AKYNQILRIEEELGSKAKFAGRSFRNPLAK. The residue at position 406 (K406) is an N6-acetyllysine. K420 bears the N6-acetyllysine; alternate mark. N6-succinyllysine; alternate is present on K420. K420 carries the post-translational modification N6-malonyllysine; alternate.

The protein belongs to the enolase family. In terms of assembly, mammalian enolase is composed of 3 isozyme subunits, alpha, beta and gamma, which can form homodimers or heterodimers which are cell-type and development-specific. ENO1 interacts with PLG in the neuronal plasma membrane and promotes its activation. The C-terminal lysine is required for this binding. Interacts with ENO4 and PGAM2. Interacts with CMTM6. It depends on Mg(2+) as a cofactor. ISGylated. In terms of processing, lysine 2-hydroxyisobutyrylation (Khib) by p300/EP300 activates the phosphopyruvate hydratase activity. In terms of tissue distribution, the alpha/alpha homodimer is expressed in embryo and in most adult tissues. The alpha/beta heterodimer and the beta/beta homodimer are found in striated muscle, and the alpha/gamma heterodimer and the gamma/gamma homodimer in neurons.

Its subcellular location is the cytoplasm. It is found in the cell membrane. It carries out the reaction (2R)-2-phosphoglycerate = phosphoenolpyruvate + H2O. The protein operates within carbohydrate degradation; glycolysis; pyruvate from D-glyceraldehyde 3-phosphate: step 4/5. In terms of biological role, glycolytic enzyme the catalyzes the conversion of 2-phosphoglycerate to phosphoenolpyruvate. In addition to glycolysis, involved in various processes such as growth control, hypoxia tolerance and allergic responses. May also function in the intravascular and pericellular fibrinolytic system due to its ability to serve as a receptor and activator of plasminogen on the cell surface of several cell-types such as leukocytes and neurons. Stimulates immunoglobulin production. The chain is Alpha-enolase (ENO1) from Bos taurus (Bovine).